The sequence spans 301 residues: Transposase InsD for insertion element IS2D (301 aa).

In terms of domain architecture, Integrase catalytic spans 106–289 (KPAVPPSKRA…SPREYLRQRA (184 aa)).

Its function is as follows. Involved in the transposition of the insertion sequence IS2. In Escherichia coli (strain K12), this protein is Transposase InsD for insertion element IS2D (insD2).